Here is a 1257-residue protein sequence, read N- to C-terminus: Liprin-alpha-2 (1257 aa).

A disordered region spans residues 1–29; sequence MMCEVMPTINEDTPMSQRGSQSSGSDSDS. A compositionally biased stretch (low complexity) spans 16–26; it reads SQRGSQSSGSD. Coiled-coil stretches lie at residues 29–154 and 185–235; these read SHFE…SLRM and KALD…SSEG. Phosphoserine is present on Ser236. Thr237 bears the Phosphothreonine mark. Ser239 bears the Phosphoserine mark. Coiled-coil stretches lie at residues 264 to 541 and 643 to 695; these read TDDT…SLIE and HSDA…GLNL. A disordered region spans residues 439–463; that stretch reads GQLEEKNQELQRARQREKMNEEHNK. Phosphoserine occurs at positions 687 and 689. Positions 709–725 are enriched in low complexity; the sequence is TASSLASSSPPSGHSTP. Disordered regions lie at residues 709–738 and 759–834; these read TASS…EMDR and EEDG…KSSI. Residues 787–802 are compositionally biased toward polar residues; it reads TLPSSYHNDARSSLSA. Ser817 and Ser820 each carry phosphoserine. 3 SAM domains span residues 898 to 964, 1020 to 1084, and 1108 to 1177; these read WDGP…MVSL, NHEW…LKRL, and WSND…LLAL. Residues 1081–1107 adopt a coiled-coil conformation; it reads LKRLNYDRKELERRREASQHEIKDVLV.

Belongs to the liprin family. Liprin-alpha subfamily. As to quaternary structure, forms homodimers and heterodimers with liprins-alpha and liprins-beta. Interacts with the second PTPase domain of PTPRD, PTPRF and PTPRS. Interacts with KIF1A; the interaction decreases in presence of calcium.

It is found in the cytoplasm. The protein resides in the cell surface. The protein localises to the cell projection. Its subcellular location is the dendritic spine. Its function is as follows. Alters PTPRF cellular localization and induces PTPRF clustering. May regulate the disassembly of focal adhesions. May localize receptor-like tyrosine phosphatases type 2A at specific sites on the plasma membrane, possibly regulating their interaction with the extracellular environment and their association with substrates. In neuronal cells, is a scaffolding protein in the dendritic spines which acts as immobile postsynaptic post able to recruit KIF1A-driven dense core vesicles to dendritic spines. The chain is Liprin-alpha-2 (Ppfia2) from Mus musculus (Mouse).